We begin with the raw amino-acid sequence, 201 residues long: uncharacterized protein (201 aa).

Disordered regions lie at residues 46 to 80 (PLVNPKYDNPQIESAELDGSQNDNYSTDTSQSYDE) and 143 to 201 (SSTS…ANPA). 2 stretches are compositionally biased toward polar residues: residues 64–78 (GSQNDNYSTDTSQSY) and 143–167 (SSTSAKTIQNDKPATDVSLGSNSPA).

This is an uncharacterized protein from Legionella pneumophila.